The chain runs to 225 residues: Large ribosomal subunit protein bL25 (225 aa).

Positions 206 to 225 (EDSKNKITKDNETNKDKSNL) are disordered.

The protein belongs to the bacterial ribosomal protein bL25 family. CTC subfamily. Part of the 50S ribosomal subunit; part of the 5S rRNA/L5/L18/L25 subcomplex. Contacts the 5S rRNA. Binds to the 5S rRNA independently of L5 and L18.

Functionally, this is one of the proteins that binds to the 5S RNA in the ribosome where it forms part of the central protuberance. This is Large ribosomal subunit protein bL25 from Vesicomyosocius okutanii subsp. Calyptogena okutanii (strain HA).